The sequence spans 533 residues: Lysine--tRNA ligase 1 (533 aa).

The short motif at 26–34 (PSGHIHIGN) is the 'HIGH' region element. A 'KMSKS' region motif is present at residues 272–276 (AMSSS).

This sequence belongs to the class-I aminoacyl-tRNA synthetase family.

It is found in the cytoplasm. It carries out the reaction tRNA(Lys) + L-lysine + ATP = L-lysyl-tRNA(Lys) + AMP + diphosphate. The protein is Lysine--tRNA ligase 1 of Methanosarcina acetivorans (strain ATCC 35395 / DSM 2834 / JCM 12185 / C2A).